We begin with the raw amino-acid sequence, 155 residues long: 3-hydroxyacyl-[acyl-carrier-protein] dehydratase FabZ (155 aa).

Histidine 58 is a catalytic residue.

It belongs to the thioester dehydratase family. FabZ subfamily.

Its subcellular location is the cytoplasm. It catalyses the reaction a (3R)-hydroxyacyl-[ACP] = a (2E)-enoyl-[ACP] + H2O. Its function is as follows. Involved in unsaturated fatty acids biosynthesis. Catalyzes the dehydration of short chain beta-hydroxyacyl-ACPs and long chain saturated and unsaturated beta-hydroxyacyl-ACPs. The polypeptide is 3-hydroxyacyl-[acyl-carrier-protein] dehydratase FabZ (Rhizobium leguminosarum bv. trifolii (strain WSM2304)).